Reading from the N-terminus, the 503-residue chain is Variant surface glycoprotein AnTaT 1.1 (503 aa).

Positions 1–29 (MVTKERNAALKIVMLVASALTLHPQQALA) are cleaved as a signal peptide. 2 cysteine pairs are disulfide-bonded: Cys-45-Cys-172 and Cys-154-Cys-209. Asn-113 is a glycosylation site (N-linked (GlcNAc...) asparagine). Asn-419 and Asn-432 each carry an N-linked (GlcNAc...) asparagine glycan. The GPI-anchor amidated aspartate moiety is linked to residue Asp-480. Residues 481–503 (SSILLTKNFALSVVSAALVALLF) constitute a propeptide, removed in mature form.

It localises to the cell membrane. VSG forms a coat on the surface of the parasite. The trypanosome evades the immune response of the host by expressing a series of antigenically distinct VSGs from an estimated 1000 VSG genes. This Trypanosoma brucei brucei protein is Variant surface glycoprotein AnTaT 1.1.